Reading from the N-terminus, the 411-residue chain is Putative ion-transport protein YfeO (411 aa).

11 consecutive transmembrane segments (helical) span residues 9-29 (MLLL…VLIA), 54-74 (DSPF…GLII), 99-119 (ALPG…SLGP), 149-169 (ILAS…AALI), 186-206 (LFAP…FFHP), 223-243 (IASG…AVWC), 258-278 (VLIL…GGPL), 296-316 (LGAG…VIAA), 322-342 (GGRI…LHAH), 343-363 (VEAV…VLVV), and 386-406 (LLCI…LLAA).

This sequence belongs to the chloride channel (TC 2.A.49) family.

The protein localises to the cell membrane. The polypeptide is Putative ion-transport protein YfeO (Salmonella paratyphi A (strain ATCC 9150 / SARB42)).